The chain runs to 130 residues: Small ribosomal subunit protein uS9 (130 aa).

It belongs to the universal ribosomal protein uS9 family.

This chain is Small ribosomal subunit protein uS9, found in Shewanella amazonensis (strain ATCC BAA-1098 / SB2B).